A 326-amino-acid chain; its full sequence is Alkanal monooxygenase beta chain (326 aa).

This sequence belongs to the bacterial luciferase oxidoreductase family. Heterodimer of an alpha and a beta chain.

The catalysed reaction is a long-chain fatty aldehyde + FMNH2 + O2 = a long-chain fatty acid + hnu + FMN + H2O + 2 H(+). Its function is as follows. Light-emitting reaction in luminous bacteria. The specific role of the beta subunit is unknown, but it is absolutely required for bioluminescence activity. The sequence is that of Alkanal monooxygenase beta chain (luxB) from Aliivibrio fischeri (Vibrio fischeri).